We begin with the raw amino-acid sequence, 678 residues long: Oviduct-specific glycoprotein (678 aa).

Residues 1–21 form the signal peptide; it reads MWKLLLWVGLVLVLKHHDGAA. The region spanning 22-385 is the GH18 domain; that stretch reads HKLVCYFTNW…YVLNDILVRA (364 aa). The cysteines at positions 26 and 51 are disulfide-linked. Residues 71-72, 98-101, Tyr142, 211-214, and Trp355 each bind chitin; these read LQ, GGWN, and LSYD. Residues Asn402 and Asn441 are each glycosylated (N-linked (GlcNAc...) asparagine). Residues 524 to 544 are disordered; the sequence is LTPVGHQSVTPVSHQSVSPGG. A compositionally biased stretch (polar residues) spans 528–544; the sequence is GHQSVTPVSHQSVSPGG. Asn580, Asn596, and Asn648 each carry an N-linked (GlcNAc...) asparagine glycan. The interval 581–606 is disordered; it reads ISVTPEGQTMPLRGENLTSEVGTHPR. Polar residues predominate over residues 651–662; that stretch reads SVNSVTPQTSPL. Positions 651 to 678 are disordered; sequence SVNSVTPQTSPLSLKKEIPENSAVDEEA.

Belongs to the glycosyl hydrolase 18 family. As to expression, oviduct.

The protein resides in the cytoplasmic vesicle. It is found in the secretory vesicle. In terms of biological role, binds to oocyte zona pellucida in vivo. May play a role in the fertilization process and/or early embryonic development. The polypeptide is Oviduct-specific glycoprotein (OVGP1) (Homo sapiens (Human)).